The primary structure comprises 192 residues: MLKIDKLLSAPHGIAPVLVRRAPKLVLPFAERSKSRLRAVLDNGDEAALFLARGTVLRGGDLLVAEDGSFVEVQAAAEAVLEVRAEDPHALMRAAYHLGNRHTPVEIGRDYLRLEYDAVLADMLQRLGVRAERAELPFEPEAGAYGGGHKHGHDATFAEDYAAAQAVFHEHHGHSHSHSHDHVHDEKCGHKH.

The interval 170-192 is disordered; that stretch reads EHHGHSHSHSHDHVHDEKCGHKH. Residues 178 to 192 show a composition bias toward basic and acidic residues; that stretch reads HSHDHVHDEKCGHKH.

This sequence belongs to the UreE family.

The protein localises to the cytoplasm. Involved in urease metallocenter assembly. Binds nickel. Probably functions as a nickel donor during metallocenter assembly. The chain is Urease accessory protein UreE from Cupriavidus necator (strain ATCC 17699 / DSM 428 / KCTC 22496 / NCIMB 10442 / H16 / Stanier 337) (Ralstonia eutropha).